The chain runs to 196 residues: CASP-like protein 1D1 (196 aa).

A compositionally biased stretch (basic and acidic residues) spans 1–18 (MASTDKPDRESIKSEEAP). Residues 1–22 (MASTDKPDRESIKSEEAPAAHP) form a disordered region. Over 1–29 (MASTDKPDRESIKSEEAPAAHPRRSNYSS) the chain is Cytoplasmic. A helical transmembrane segment spans residues 30–50 (VHVALRFLLFAASVTAVVVMV). The Extracellular portion of the chain corresponds to 51–84 (TAKQTKIVPVPGLPISVPLEAKFSDSPAFLYFIS). The chain crosses the membrane as a helical span at residues 85–105 (ALSVAGLYGILTTLAAISIVL). The Cytoplasmic segment spans residues 106-112 (KPAYATR). Residues 113 to 133 (FLLHFALLDVLMLGIVASATG) traverse the membrane as a helical segment. Residues 134–167 (AAGGVAYVGLKGNSHVRWGKVCNVYDKFCQHVGS) are Extracellular-facing. A helical transmembrane segment spans residues 168-188 (SIAVALFASVLLVLLTMLSVF). At 189-196 (SIYRKIPK) the chain is on the cytoplasmic side.

Belongs to the Casparian strip membrane proteins (CASP) family. In terms of assembly, homodimer and heterodimers.

It localises to the cell membrane. This Populus trichocarpa (Western balsam poplar) protein is CASP-like protein 1D1.